The primary structure comprises 293 residues: Protein nud-2 (293 aa).

Residues 36-147 adopt a coiled-coil conformation; the sequence is EIEKMMDSEL…EKIAMLESEL (112 aa). Residues 239–293 are required for interaction with unc-83 isoform c; sequence KSQRVSTGTGAGACINRIVKDLMTKVERLDSILSTIRVSNNSSNNNSSHLTTTRA.

Belongs to the nudE family. As to quaternary structure, component of a dynein-regulating complex composed of at least lis-1 and nud-2. Interacts with lis-1; the interaction is direct. Interacts (via C-terminus) with unc-83; the interaction is direct, and is required for recruitment of nud-2 to the nuclear envelope. As to expression, expressed in ventral cord neurons, the pharynx, seam cells of the hypodermis and in vulval muscle cells.

It localises to the nucleus envelope. Functionally, part of a complex with lis-1, which is recruited to the nuclear envelope by unc-83, where, in turn, it recruits dynein to the nuclear surface and regulates nuclear migration in hypodermal precursor cells. Plays a role in GABAergic synaptic vesicle localization in the ventral nerve cord. This chain is Protein nud-2, found in Caenorhabditis elegans.